A 348-amino-acid polypeptide reads, in one-letter code: Dihydroorotase (348 aa).

Residues His-17 and His-19 each contribute to the Zn(2+) site. Residues 19–21 and Asn-45 each bind substrate; that span reads HLR. Residues Lys-103, His-140, and His-178 each contribute to the Zn(2+) site. Lys-103 carries the N6-carboxylysine modification. Substrate is bound at residue His-140. Residue Leu-223 coordinates substrate. Asp-251 is a binding site for Zn(2+). Residue Asp-251 is part of the active site. Substrate-binding residues include His-255 and Ala-267.

The protein belongs to the metallo-dependent hydrolases superfamily. DHOase family. Class II DHOase subfamily. In terms of assembly, homodimer. Requires Zn(2+) as cofactor.

It carries out the reaction (S)-dihydroorotate + H2O = N-carbamoyl-L-aspartate + H(+). It functions in the pathway pyrimidine metabolism; UMP biosynthesis via de novo pathway; (S)-dihydroorotate from bicarbonate: step 3/3. Functionally, catalyzes the reversible cyclization of carbamoyl aspartate to dihydroorotate. In Klebsiella pneumoniae (strain 342), this protein is Dihydroorotase.